The following is a 518-amino-acid chain: Protease Do-like 4, mitochondrial (518 aa).

A mitochondrion-targeting transit peptide spans 1 to 23; that stretch reads MLFRFLQTLARFCRFLLISVLGF. Residues 98–262 form a serine protease region; the sequence is ESGGSGFVIS…IPTPVIKHFL (165 aa). Residues His-116, Asp-147, and Ser-225 each act as charge relay system in the active site. Residues 278–358 form the PDZ domain; that stretch reads DISYQLMENS…HFVSMKKLDE (81 aa).

Belongs to the peptidase S1C family.

It localises to the mitochondrion membrane. Functionally, putative serine protease. The chain is Protease Do-like 4, mitochondrial (DEGP4) from Arabidopsis thaliana (Mouse-ear cress).